We begin with the raw amino-acid sequence, 410 residues long: Peptidase T (410 aa).

Residue H77 coordinates Zn(2+). D79 is an active-site residue. D140 lines the Zn(2+) pocket. E174 acts as the Proton acceptor in catalysis. 3 residues coordinate Zn(2+): E175, D197, and H379.

This sequence belongs to the peptidase M20B family. The cofactor is Zn(2+).

Its subcellular location is the cytoplasm. It carries out the reaction Release of the N-terminal residue from a tripeptide.. Functionally, cleaves the N-terminal amino acid of tripeptides. This chain is Peptidase T, found in Desulfitobacterium hafniense (strain Y51).